Reading from the N-terminus, the 232-residue chain is Phosphatidylserine decarboxylase proenzyme (232 aa).

The active-site Schiff-base intermediate with substrate; via pyruvic acid is the Ser190. Ser190 carries the post-translational modification Pyruvic acid (Ser); by autocatalysis.

The protein belongs to the phosphatidylserine decarboxylase family. PSD-A subfamily. As to quaternary structure, heterodimer of a large membrane-associated beta subunit and a small pyruvoyl-containing alpha subunit. It depends on pyruvate as a cofactor. Post-translationally, is synthesized initially as an inactive proenzyme. Formation of the active enzyme involves a self-maturation process in which the active site pyruvoyl group is generated from an internal serine residue via an autocatalytic post-translational modification. Two non-identical subunits are generated from the proenzyme in this reaction, and the pyruvate is formed at the N-terminus of the alpha chain, which is derived from the carboxyl end of the proenzyme. The post-translation cleavage follows an unusual pathway, termed non-hydrolytic serinolysis, in which the side chain hydroxyl group of the serine supplies its oxygen atom to form the C-terminus of the beta chain, while the remainder of the serine residue undergoes an oxidative deamination to produce ammonia and the pyruvoyl prosthetic group on the alpha chain.

It localises to the cell membrane. It carries out the reaction a 1,2-diacyl-sn-glycero-3-phospho-L-serine + H(+) = a 1,2-diacyl-sn-glycero-3-phosphoethanolamine + CO2. The protein operates within phospholipid metabolism; phosphatidylethanolamine biosynthesis; phosphatidylethanolamine from CDP-diacylglycerol: step 2/2. Functionally, catalyzes the formation of phosphatidylethanolamine (PtdEtn) from phosphatidylserine (PtdSer). This chain is Phosphatidylserine decarboxylase proenzyme, found in Rhodopseudomonas palustris (strain BisA53).